The chain runs to 610 residues: Diol dehydratase-reactivating factor large subunit (610 aa).

11-13 (NSS) contacts ATP. Mg(2+) is bound by residues threonine 105, aspartate 166, and aspartate 183. ATP is bound by residues 459–462 (EEIK), 557–558 (GS), and arginine 591.

This sequence belongs to the DdrA/PduG family. As to quaternary structure, component of the DDR complex, a heterotetramer of DdrA(2)/DdrB(2). The DDR complex interacts with the diol dehydratase complex in the presence of ADP but not ATP. Mg(2+) serves as cofactor.

It carries out the reaction ATP + H2O = ADP + phosphate + H(+). Large subunit of the diol dehydratase-reactivating factor (DDR), which reactivates suicidally inhibited adenosylcobalamin-dependent diol dehydratase (DD, pddA, pddB, pddC). DDR acts as a chaperone, reactivating inactivated DD holoenzyme in the presence of ATP, Mg(2+) and free adenosylcobalamin (AdoCbl), by mediating the exchange of the tightly bound damaged cofactor AdoCbl for a free intact one. Reactivation takes place in two steps: ADP-dependent cobalamin release, then ATP-dependent dissociation of the DD apoenzyme-DDR complex. DDR has weak ATPase activity which is required for DD reactivation. This subunit contains the adenosine nucleotide binding site. Activates glycerol-inactivated, O2-inactivated holoenzyme and inactivated enzyme-cyanocobalamin complex. Also reactivates glycerol-inactivated hologlycerol dehydratase, a DD isozyme. The protein is Diol dehydratase-reactivating factor large subunit of Klebsiella michiganensis (strain ATCC 8724 / DSM 4798 / JCM 20051 / NBRC 3318 / NRRL B-199 / KCTC 1686 / BUCSAV 143 / CCM 1901).